We begin with the raw amino-acid sequence, 207 residues long: Large ribosomal subunit protein uL4 (207 aa).

The disordered stretch occupies residues 49–78 (HAVKNRSAVSGGGRKPWRQKGTGRARQGSI).

The protein belongs to the universal ribosomal protein uL4 family. In terms of assembly, part of the 50S ribosomal subunit.

Functionally, one of the primary rRNA binding proteins, this protein initially binds near the 5'-end of the 23S rRNA. It is important during the early stages of 50S assembly. It makes multiple contacts with different domains of the 23S rRNA in the assembled 50S subunit and ribosome. Forms part of the polypeptide exit tunnel. The polypeptide is Large ribosomal subunit protein uL4 (Streptococcus uberis (strain ATCC BAA-854 / 0140J)).